We begin with the raw amino-acid sequence, 375 residues long: Mitogen-activated protein kinase 4a (375 aa).

A Protein kinase domain is found at 39-325; it reads KPPLRPIGRG…VEAALAHPYL (287 aa). Residues 45–53 and K68 each bind ATP; that span reads IGRGAYGIV. The active-site Proton acceptor is D165. The residue at position 197 (T197) is a Phosphothreonine. Positions 197-199 match the TXY motif; that stretch reads TEY. Y199 is subject to Phosphotyrosine.

Belongs to the protein kinase superfamily. CMGC Ser/Thr protein kinase family. MAP kinase subfamily. It depends on Mg(2+) as a cofactor. Post-translationally, dually phosphorylated on Thr-197 and Tyr-199, which activates the enzyme. Phosphorylated in response to pathogen-associated molecular pattern (PAMP) chitin and in response to necrotrophic fungus B.cinerea spores. Not phosphorylated in response to osmotic stress. As to expression, expressed strongly in the apical cells of caulonemal air filaments and rhizoids in fully developed plants and less strongly, but readily detectable in filamentous protonemal tissue at the edge of the plant consisting of both chloronema and caulonema. When filamentous growth of protonema is promoted, the expression is strongest in newly formed apical tip cells of protonemal tissue.

The protein localises to the cytoplasm. Its subcellular location is the nucleus. The catalysed reaction is L-seryl-[protein] + ATP = O-phospho-L-seryl-[protein] + ADP + H(+). It catalyses the reaction L-threonyl-[protein] + ATP = O-phospho-L-threonyl-[protein] + ADP + H(+). Activated by threonine and tyrosine phosphorylation. Activated in response to bacterial and fungal pathogen-associated molecular patterns (PAMPs) including chitin, chitosan and peptidyl glycans (PGNs). Activation in response to chitin requires the CERK1, MEKK1a/b, MKK1a/b/c and MPK4a/b signaling pathway. Activated in response to necrotrophic fungus B.cinerea spores. Not activated in response to osmotic stress. Functionally, the CERK1, MEKK1a/b, MKK1a/b/c and MPK4a/b proteins are involved in pathogen defense. The pathway induces rapid growth inhibition, cell wall depositions and accumulation of defense-related transcripts. This protein is required for innate immunity triggered by pathogen-associated molecular patterns (PAMPs). Involved in resistance to necrotrophic fungi B.cinerea and A.brassicicola. Involved in the transduction of signals from chitosan perception to the activation of defense genes. This Physcomitrium patens (Spreading-leaved earth moss) protein is Mitogen-activated protein kinase 4a (MPK4a).